The primary structure comprises 242 residues: UPF0246 protein SPP_1571 (242 aa).

The protein belongs to the UPF0246 family.

The protein is UPF0246 protein SPP_1571 of Streptococcus pneumoniae (strain P1031).